Here is a 248-residue protein sequence, read N- to C-terminus: Proteasome subunit alpha (248 aa).

The segment at 229-248 (LLEADGATTEAESSAEEEDE) is disordered.

This sequence belongs to the peptidase T1A family. As to quaternary structure, the 20S proteasome core is composed of 14 alpha and 14 beta subunits that assemble into four stacked heptameric rings, resulting in a barrel-shaped structure. The two inner rings, each composed of seven catalytic beta subunits, are sandwiched by two outer rings, each composed of seven alpha subunits. The catalytic chamber with the active sites is on the inside of the barrel. Has a gated structure, the ends of the cylinder being occluded by the N-termini of the alpha-subunits. Is capped by the proteasome-associated ATPase, ARC.

It is found in the cytoplasm. The protein operates within protein degradation; proteasomal Pup-dependent pathway. Its activity is regulated as follows. The formation of the proteasomal ATPase ARC-20S proteasome complex, likely via the docking of the C-termini of ARC into the intersubunit pockets in the alpha-rings, may trigger opening of the gate for substrate entry. Interconversion between the open-gate and close-gate conformations leads to a dynamic regulation of the 20S proteasome proteolysis activity. Functionally, component of the proteasome core, a large protease complex with broad specificity involved in protein degradation. This chain is Proteasome subunit alpha, found in Streptomyces scabiei (strain 87.22).